Reading from the N-terminus, the 235-residue chain is Large ribosomal subunit protein uL1 (235 aa).

Belongs to the universal ribosomal protein uL1 family. Part of the 50S ribosomal subunit.

Functionally, binds directly to 23S rRNA. The L1 stalk is quite mobile in the ribosome, and is involved in E site tRNA release. Its function is as follows. Protein L1 is also a translational repressor protein, it controls the translation of the L11 operon by binding to its mRNA. The sequence is that of Large ribosomal subunit protein uL1 from Mycobacterium leprae (strain Br4923).